Reading from the N-terminus, the 341-residue chain is Mitochondrial glutathione transporter SLC25A40 (341 aa).

Solcar repeat units follow at residues 14–132 (ITPS…LRDI), 140–224 (RAEI…VKQS), and 234–328 (PTFA…GKSF). 6 helical membrane-spanning segments follow: residues 20-40 (MIAS…LDVV), 104-124 (LWSG…IYFT), 143-163 (IASL…ISPL), 200-221 (WGPT…YELV), 236-256 (FAIS…VTLP), and 299-319 (GLFA…AIMI).

Belongs to the mitochondrial carrier (TC 2.A.29) family.

The protein localises to the mitochondrion inner membrane. The enzyme catalyses glutathione(in) = glutathione(out). Functionally, probable mitochondrial transporter required for glutathione import into mitochondria. Glutathione, which plays key roles in oxidative metabolism, is produced exclusively in the cytosol and is imported in many organelles. Mitochondrial glutathione is required for the activity and stability of proteins containing iron-sulfur clusters. The polypeptide is Mitochondrial glutathione transporter SLC25A40 (Xenopus tropicalis (Western clawed frog)).